Here is a 165-residue protein sequence, read N- to C-terminus: MAQNKANTVSQLQSLKNKSGKSYNQLAEETGLTNVYVAQLLRRQAHLKPETAPKLKAALPELPEELIHEMMKPPLRSYDPNIIQDPTVYRLNEAVMHFGESIKEIINEEFGDGIMSAIDFYCSVDKVQGVDGKDRVVLTFDGKYLPHSEQKTEHMVSRTRPLEKQ.

The interval 1–20 (MAQNKANTVSQLQSLKNKSG) is disordered. Catalysis depends on residues Arg90, Glu93, and Ser116.

This sequence belongs to the cyanase family.

It catalyses the reaction cyanate + hydrogencarbonate + 3 H(+) = NH4(+) + 2 CO2. Functionally, catalyzes the reaction of cyanate with bicarbonate to produce ammonia and carbon dioxide. The polypeptide is Cyanate hydratase (Medicago truncatula (Barrel medic)).